A 291-amino-acid polypeptide reads, in one-letter code: 4-diphosphocytidyl-2-C-methyl-D-erythritol kinase (291 aa).

K10 is a catalytic residue. P94–S104 provides a ligand contact to ATP. Residue D136 is part of the active site.

It belongs to the GHMP kinase family. IspE subfamily.

The enzyme catalyses 4-CDP-2-C-methyl-D-erythritol + ATP = 4-CDP-2-C-methyl-D-erythritol 2-phosphate + ADP + H(+). Its pathway is isoprenoid biosynthesis; isopentenyl diphosphate biosynthesis via DXP pathway; isopentenyl diphosphate from 1-deoxy-D-xylulose 5-phosphate: step 3/6. Catalyzes the phosphorylation of the position 2 hydroxy group of 4-diphosphocytidyl-2C-methyl-D-erythritol. The polypeptide is 4-diphosphocytidyl-2-C-methyl-D-erythritol kinase (Listeria welshimeri serovar 6b (strain ATCC 35897 / DSM 20650 / CCUG 15529 / CIP 8149 / NCTC 11857 / SLCC 5334 / V8)).